A 244-amino-acid polypeptide reads, in one-letter code: MKSLFEQFEIDLYCIIITRFFDISITTITVYLGLLMVIVIGMYKVSLYKATIIGGNNWQHIGEMIYEFVVDLIIEQVGKPGILFFPFIMSLFLFVLTLNVMGLIPLSFTVTGQLLVTFTLAITIMIGITIWGFRIHGIKFLNIFVPSGIEPWLLPLLVFIEIMSYVLRPISLAVRLFANMLAGHLLIHIIGVAAIYLMQFYFIGILPWICVIAFMFLELGIAFLQAYVFVLLTLIYIANIINLH.

The next 7 helical transmembrane spans lie at 20–40 (FFDI…VIVI), 81–101 (GILF…LNVM), 113–133 (QLLV…IWGF), 140–160 (FLNI…LVFI), 176–196 (LFAN…AAIY), 202–222 (FIGI…LGIA), and 223–243 (FLQA…IINL).

Belongs to the ATPase A chain family. In terms of assembly, F-type ATPases have 2 components, CF(1) - the catalytic core - and CF(0) - the membrane proton channel. CF(1) has five subunits: alpha(3), beta(3), gamma(1), delta(1), epsilon(1). CF(0) has three main subunits: a, b and c.

It is found in the mitochondrion inner membrane. Its function is as follows. Mitochondrial membrane ATP synthase (F(1)F(0) ATP synthase or Complex V) produces ATP from ADP in the presence of a proton gradient across the membrane which is generated by electron transport complexes of the respiratory chain. F-type ATPases consist of two structural domains, F(1) - containing the extramembraneous catalytic core and F(0) - containing the membrane proton channel, linked together by a central stalk and a peripheral stalk. During catalysis, ATP synthesis in the catalytic domain of F(1) is coupled via a rotary mechanism of the central stalk subunits to proton translocation. Key component of the proton channel; it may play a direct role in the translocation of protons across the membrane. In Dictyostelium discoideum (Social amoeba), this protein is ATP synthase subunit a (atp6).